We begin with the raw amino-acid sequence, 147 residues long: Peptide methionine sulfoxide reductase MsrB 2 (147 aa).

The MsrB domain maps to 6-129 (TDEEVSKLTP…NSAALRFIPR (124 aa)). Catalysis depends on C118, which acts as the Nucleophile.

It belongs to the MsrB Met sulfoxide reductase family.

It carries out the reaction L-methionyl-[protein] + [thioredoxin]-disulfide + H2O = L-methionyl-(R)-S-oxide-[protein] + [thioredoxin]-dithiol. This is Peptide methionine sulfoxide reductase MsrB 2 (msrB2) from Rhizobium meliloti (strain 1021) (Ensifer meliloti).